Consider the following 106-residue polypeptide: 10 kDa heat shock protein, mitochondrial (106 aa).

Serine 2 is subject to N-acetylserine. Serine 31 carries the phosphoserine modification.

This sequence belongs to the GroES chaperonin family. As to quaternary structure, homohexamer. Post-translationally, the N-terminus is blocked.

The protein resides in the mitochondrion matrix. Eukaryotic CPN10 homolog which is essential for mitochondrial protein biogenesis, together with CPN60. Binds to CPN60 in the presence of Mg-ATP and suppresses the ATPase activity of the latter. The sequence is that of 10 kDa heat shock protein, mitochondrial (HSP10) from Saccharomyces cerevisiae (strain ATCC 204508 / S288c) (Baker's yeast).